Here is a 1214-residue protein sequence, read N- to C-terminus: NBPF family member NBPF1 (1214 aa).

Positions 70-128 (MLRNERQFKEEKLAEQLKQAEELRQYKVLVHSQERELTQLREKLREGRDASRSLNQHLQ) form a coiled coil. The tract at residues 162 to 200 (LSPENDEDEDEDVQVEEAEKVLESSAPREVQKAEESKVP) is disordered. Acidic residues predominate over residues 165–177 (ENDEDEDEDVQVE). The Olduvai 1 domain occupies 165 to 259 (ENDEDEDEDV…ECQDAVNILP (95 aa)). Residues 190–200 (EVQKAEESKVP) are compositionally biased toward basic and acidic residues. The stretch at 292 to 399 (NEKLHPQLAE…ASRSLNQHLQ (108 aa)) forms a coiled coil. Positions 433–471 (LSPENDEDEDEDVQVEEAEKVLESSAPREVQKAEESKVP) are disordered. Positions 436 to 448 (ENDEDEDEDVQVE) are enriched in acidic residues. The 95-residue stretch at 436-530 (ENDEDEDEDV…ECQDAVNILP (95 aa)) folds into the Olduvai 2 domain. Positions 461–471 (EVQKAEESKVP) are enriched in basic and acidic residues. Residues 610 to 670 (KSMLRNERQF…ASCSLNQHLQ (61 aa)) adopt a coiled-coil conformation. Olduvai domains are found at residues 707-799 (ENDN…HIIP), 800-888 (ENES…ATGP), 891-946 (SREL…LDMD), 947-1038 (EIEK…PPCP), 1041-1114 (SREL…RSTK), and 1116-1214 (RRRR…IFPQ). 2 disordered regions span residues 722-746 (EKVQ…EDSL) and 791-837 (WEDA…EGYS). 2 stretches are compositionally biased toward acidic residues: residues 801–810 (NESDDEEEEE) and 821–833 (ESEE…ESWD). Residues 1102–1121 (GKGKKRRGRRSTKKRRRRGR) are compositionally biased toward basic residues. A disordered region spans residues 1102 to 1136 (GKGKKRRGRRSTKKRRRRGRKEGEEDQNPPCPRLS).

This sequence belongs to the NBPF family. In terms of tissue distribution, widely expressed. The only tissue which shows a weak expression is kidney.

The protein localises to the cytoplasm. This Homo sapiens (Human) protein is NBPF family member NBPF1.